A 416-amino-acid chain; its full sequence is MKILLIGSGGREHAMAWKMAQNKSVERIYCAPGNGGTAKENKCENVNLEKTEELIEFASKNNIDLTVVGPEAPLVDGIVNEFKEKGLKIFGPGKVGAQLEGSKSFSKDFMKKYNVKTAEYAVFENSEESLEYLKKCTYPIVIKADGLAAGKGVVICEDYKLAEETIKAFMVKDVFKGSGKKVVIEEYLEGVEASILSITDGKAIIPFVSSKDHKQIFDGNKGPNTGGMGAISPNPYCTEEVLKSFEEEILKPTLIGIQEERMDFTGIIFFGLMITKKGVYLLEYNVRLGDPETQVVLYLMKSDFVDLINAAMDKKLSDFDIEWYDGNACCVVAASKGYPKNYSTGYEISGIDDAGDKVFCAGVKLENGVYKTSGGRVLCASARGITLDEAIKKAYTDIERIKFDGIYYRKDIGKSK.

One can recognise an ATP-grasp domain in the interval 107–313 (KDFMKKYNVK…FVDLINAAMD (207 aa)). Residue 133–194 (LKKCTYPIVI…EEYLEGVEAS (62 aa)) participates in ATP binding. Mg(2+) contacts are provided by E283 and N285.

The protein belongs to the GARS family. Mg(2+) is required as a cofactor. It depends on Mn(2+) as a cofactor.

It carries out the reaction 5-phospho-beta-D-ribosylamine + glycine + ATP = N(1)-(5-phospho-beta-D-ribosyl)glycinamide + ADP + phosphate + H(+). The protein operates within purine metabolism; IMP biosynthesis via de novo pathway; N(1)-(5-phospho-D-ribosyl)glycinamide from 5-phospho-alpha-D-ribose 1-diphosphate: step 2/2. In Clostridium acetobutylicum (strain ATCC 824 / DSM 792 / JCM 1419 / IAM 19013 / LMG 5710 / NBRC 13948 / NRRL B-527 / VKM B-1787 / 2291 / W), this protein is Phosphoribosylamine--glycine ligase.